We begin with the raw amino-acid sequence, 497 residues long: Probable cytosol aminopeptidase (497 aa).

Residues Lys263 and Asp268 each coordinate Mn(2+). Residue Lys275 is part of the active site. Mn(2+) is bound by residues Asp286, Asp345, and Glu347. The active site involves Arg349.

The protein belongs to the peptidase M17 family. Mn(2+) is required as a cofactor.

It localises to the cytoplasm. The catalysed reaction is Release of an N-terminal amino acid, Xaa-|-Yaa-, in which Xaa is preferably Leu, but may be other amino acids including Pro although not Arg or Lys, and Yaa may be Pro. Amino acid amides and methyl esters are also readily hydrolyzed, but rates on arylamides are exceedingly low.. The enzyme catalyses Release of an N-terminal amino acid, preferentially leucine, but not glutamic or aspartic acids.. Functionally, presumably involved in the processing and regular turnover of intracellular proteins. Catalyzes the removal of unsubstituted N-terminal amino acids from various peptides. This Allorhizobium ampelinum (strain ATCC BAA-846 / DSM 112012 / S4) (Agrobacterium vitis (strain S4)) protein is Probable cytosol aminopeptidase.